Consider the following 339-residue polypeptide: Ketol-acid reductoisomerase (NADP(+)) (339 aa).

One can recognise a KARI N-terminal Rossmann domain in the interval 1 to 182 (MRVYYDRDAD…GGGRSGIIET (182 aa)). NADP(+) contacts are provided by residues 24–27 (YGSQ), Arg48, Ser51, Ser53, and 83–86 (DELQ). His108 is a catalytic residue. Position 134 (Gly134) interacts with NADP(+). One can recognise a KARI C-terminal knotted domain in the interval 183-328 (TFREECETDL…GRLRAMMPWI (146 aa)). 4 residues coordinate Mg(2+): Asp191, Glu195, Glu227, and Glu231. Ser252 is a substrate binding site.

Belongs to the ketol-acid reductoisomerase family. The cofactor is Mg(2+).

It catalyses the reaction (2R)-2,3-dihydroxy-3-methylbutanoate + NADP(+) = (2S)-2-acetolactate + NADPH + H(+). The catalysed reaction is (2R,3R)-2,3-dihydroxy-3-methylpentanoate + NADP(+) = (S)-2-ethyl-2-hydroxy-3-oxobutanoate + NADPH + H(+). It functions in the pathway amino-acid biosynthesis; L-isoleucine biosynthesis; L-isoleucine from 2-oxobutanoate: step 2/4. Its pathway is amino-acid biosynthesis; L-valine biosynthesis; L-valine from pyruvate: step 2/4. Its function is as follows. Involved in the biosynthesis of branched-chain amino acids (BCAA). Catalyzes an alkyl-migration followed by a ketol-acid reduction of (S)-2-acetolactate (S2AL) to yield (R)-2,3-dihydroxy-isovalerate. In the isomerase reaction, S2AL is rearranged via a Mg-dependent methyl migration to produce 3-hydroxy-3-methyl-2-ketobutyrate (HMKB). In the reductase reaction, this 2-ketoacid undergoes a metal-dependent reduction by NADPH to yield (R)-2,3-dihydroxy-isovalerate. The protein is Ketol-acid reductoisomerase (NADP(+)) of Rhodospirillum rubrum (strain ATCC 11170 / ATH 1.1.1 / DSM 467 / LMG 4362 / NCIMB 8255 / S1).